We begin with the raw amino-acid sequence, 248 residues long: Probable phosphatase Sfri_3709 (248 aa).

Residues His8, His10, His16, His41, Glu74, His102, His132, Asp193, and His195 each coordinate Zn(2+).

It belongs to the PHP family. Requires Zn(2+) as cofactor.

The polypeptide is Probable phosphatase Sfri_3709 (Shewanella frigidimarina (strain NCIMB 400)).